The following is a 421-amino-acid chain: ATP-dependent RNA helicase RhlB (421 aa).

Positions 9 to 37 (QKFSDFALHPKVVEALEKKGFHNCTPIQA) match the Q motif motif. The Helicase ATP-binding domain occupies 40–219 (LPLTLAGRDV…FEQMNNAEYI (180 aa)). Position 53–60 (53–60 (AQTGTGKT)) interacts with ATP. The short motif at 165 to 168 (DEAD) is the DEAD box element. Residues 245–390 (RLLQTLIEEE…VSKYNPDALM (146 aa)) enclose the Helicase C-terminal domain. The segment at 392–421 (DLPKPLRLTRPRTGNGPRRTGTPRNRRRSG) is disordered. The span at 402 to 414 (PRTGNGPRRTGTP) shows a compositional bias: low complexity.

This sequence belongs to the DEAD box helicase family. RhlB subfamily. In terms of assembly, component of the RNA degradosome, which is a multiprotein complex involved in RNA processing and mRNA degradation.

Its subcellular location is the cytoplasm. The enzyme catalyses ATP + H2O = ADP + phosphate + H(+). Functionally, DEAD-box RNA helicase involved in RNA degradation. Has RNA-dependent ATPase activity and unwinds double-stranded RNA. The sequence is that of ATP-dependent RNA helicase RhlB from Escherichia coli O7:K1 (strain IAI39 / ExPEC).